Here is a 149-residue protein sequence, read N- to C-terminus: Arginine repressor (149 aa).

This sequence belongs to the ArgR family.

It is found in the cytoplasm. Its pathway is amino-acid biosynthesis; L-arginine biosynthesis [regulation]. In terms of biological role, regulates arginine biosynthesis genes. In Listeria innocua serovar 6a (strain ATCC BAA-680 / CLIP 11262), this protein is Arginine repressor.